We begin with the raw amino-acid sequence, 337 residues long: tRNA N6-adenosine threonylcarbamoyltransferase (337 aa).

H110 and H114 together coordinate Fe cation. Substrate-binding positions include 133–137 (MVSGG), D166, G179, D183, and N276. Fe cation is bound at residue D302.

It belongs to the KAE1 / TsaD family. Fe(2+) is required as a cofactor.

The protein resides in the cytoplasm. The catalysed reaction is L-threonylcarbamoyladenylate + adenosine(37) in tRNA = N(6)-L-threonylcarbamoyladenosine(37) in tRNA + AMP + H(+). Required for the formation of a threonylcarbamoyl group on adenosine at position 37 (t(6)A37) in tRNAs that read codons beginning with adenine. Is involved in the transfer of the threonylcarbamoyl moiety of threonylcarbamoyl-AMP (TC-AMP) to the N6 group of A37, together with TsaE and TsaB. TsaD likely plays a direct catalytic role in this reaction. The sequence is that of tRNA N6-adenosine threonylcarbamoyltransferase from Fervidobacterium nodosum (strain ATCC 35602 / DSM 5306 / Rt17-B1).